A 400-amino-acid polypeptide reads, in one-letter code: S-adenosylmethionine synthase (400 aa).

ATP is bound at residue histidine 17. Residue aspartate 19 participates in Mg(2+) binding. A K(+)-binding site is contributed by glutamate 45. Residues glutamate 58 and glutamine 101 each contribute to the L-methionine site. The flexible loop stretch occupies residues 101–111 (QSADIAMGVDQ). ATP-binding positions include 177-179 (DGK), 244-245 (RF), aspartate 253, 259-260 (RK), alanine 276, and lysine 280. Residue aspartate 253 coordinates L-methionine. An L-methionine-binding site is contributed by lysine 284.

This sequence belongs to the AdoMet synthase family. Homotetramer; dimer of dimers. Mg(2+) serves as cofactor. The cofactor is K(+).

The protein resides in the cytoplasm. It carries out the reaction L-methionine + ATP + H2O = S-adenosyl-L-methionine + phosphate + diphosphate. The protein operates within amino-acid biosynthesis; S-adenosyl-L-methionine biosynthesis; S-adenosyl-L-methionine from L-methionine: step 1/1. In terms of biological role, catalyzes the formation of S-adenosylmethionine (AdoMet) from methionine and ATP. The overall synthetic reaction is composed of two sequential steps, AdoMet formation and the subsequent tripolyphosphate hydrolysis which occurs prior to release of AdoMet from the enzyme. This Bacillus subtilis (strain 168) protein is S-adenosylmethionine synthase.